The primary structure comprises 363 residues: tRNA/tmRNA (uracil-C(5))-methyltransferase (363 aa).

S-adenosyl-L-methionine contacts are provided by Gln-187, Tyr-215, Asn-220, Glu-236, and Asp-296. The Nucleophile role is filled by Cys-321. Glu-355 (proton acceptor) is an active-site residue.

The protein belongs to the class I-like SAM-binding methyltransferase superfamily. RNA M5U methyltransferase family. TrmA subfamily.

It catalyses the reaction uridine(54) in tRNA + S-adenosyl-L-methionine = 5-methyluridine(54) in tRNA + S-adenosyl-L-homocysteine + H(+). The enzyme catalyses uridine(341) in tmRNA + S-adenosyl-L-methionine = 5-methyluridine(341) in tmRNA + S-adenosyl-L-homocysteine + H(+). Dual-specificity methyltransferase that catalyzes the formation of 5-methyluridine at position 54 (m5U54) in all tRNAs, and that of position 341 (m5U341) in tmRNA (transfer-mRNA). This Haemophilus influenzae (strain PittEE) protein is tRNA/tmRNA (uracil-C(5))-methyltransferase.